The sequence spans 134 residues: Agouti-related protein (134 aa).

The first 20 residues, 1-20 (MLTTMLLSCALLLAMPTMLG), serve as a signal peptide directing secretion. Positions 21-84 (AQIGLAPLEG…VLDPEGRKAR (64 aa)) are excised as a propeptide. Disulfide bonds link Cys-89–Cys-104, Cys-96–Cys-110, Cys-103–Cys-121, Cys-107–Cys-131, and Cys-112–Cys-119. In terms of domain architecture, Agouti spans 89 to 131 (CVRLHESCLGHQVPCCDPCATCYCRFFNAFCYCRKLGTATNPC). Positions 113–115 (RFF) are interaction with melanocortin receptors.

As to quaternary structure, interacts with melanocortin receptors MC3R, MC4R and MC5R.

The protein localises to the secreted. Its subcellular location is the golgi apparatus lumen. Functionally, plays a role in weight homeostasis. Involved in the control of feeding behavior through the central melanocortin system. Acts as alpha melanocyte-stimulating hormone antagonist by inhibiting cAMP production mediated by stimulation of melanocortin receptors within the hypothalamus and adrenal gland. Has very low activity with MC5R. Is an inverse agonist for MC3R and MC4R being able to suppress their constitutive activity. It promotes MC3R and MC4R endocytosis in an arrestin-dependent manner. This is Agouti-related protein (AGRP) from Sus scrofa (Pig).